We begin with the raw amino-acid sequence, 392 residues long: Membrane cofactor protein (392 aa).

An N-terminal signal peptide occupies residues 1–34 (MEPPGRRECPFPSWRFPGLLLAAMVLLLYSFSDA). Intrachain disulfides connect Cys35-Cys80, Cys64-Cys94, Cys99-Cys141, Cys127-Cys157, Cys162-Cys210, Cys191-Cys223, Cys228-Cys270, and Cys256-Cys283. 4 consecutive Sushi domains span residues 35 to 96 (CEEP…ACYR), 97 to 159 (ETCP…ICEK), 160 to 225 (VLCT…ECKV), and 226 to 285 (VKCR…KCLK). Residues 35–343 (CEEPPTFEAM…PEEGILDSLD (309 aa)) lie on the Extracellular side of the membrane. Asn83 and Asn114 each carry an N-linked (GlcNAc...) asparagine glycan. An O-linked (GalNAc...) threonine glycan is attached at Thr163. N-linked (GlcNAc...) asparagine glycosylation is present at Asn273. O-linked (GalNAc...) serine glycans are attached at residues Ser290 and Ser291. The segment covering 291 to 315 (STKPPALSHSVSTSSTTKSPASSAS) has biased composition (low complexity). The interval 291 to 328 (STKPPALSHSVSTSSTTKSPASSASGPRPTYKPPVSNY) is disordered. A glycan (O-linked (GalNAc...) threonine) is linked at Thr292. O-linked (GalNAc...) serine glycosylation is found at Ser298, Ser300, and Ser302. An O-linked (GalNAc...) threonine glycan is attached at Thr303. 2 O-linked (GalNAc...) serine glycosylation sites follow: Ser304 and Ser305. Residues Thr306 and Thr307 are each glycosylated (O-linked (GalNAc...) threonine). Ser309, Ser312, Ser313, and Ser315 each carry an O-linked (GalNAc...) serine glycan. A glycan (O-linked (GalNAc...) threonine) is linked at Thr320. Tyr321 bears the Phosphotyrosine mark. O-linked (GalNAc...) serine glycosylation is present at Ser326. Residues Asp340, Ile354, Val355, Leu369, Gln370, and His384 each carry the phosphotyrosine modification. The chain crosses the membrane as a helical span at residues 344–366 (VWVIAVIVIAIVVGVAVICVVPY). At 367–392 (RYLQRRKKKGTYLTDETHREVKFTSL) the chain is on the cytoplasmic side.

As to quaternary structure, interacts with C3b. Interacts with C4b. Interacts with moesin/MSN. (Microbial infection) Interacts (via N-terminus) with measles virus H protein; this interaction allows attachment and viral entry of vaccine and laboratory-adapted strains. In terms of assembly, (Microbial infection) Interacts with human herpesvirus 6 GH protein. As to quaternary structure, (Microbial infection) Interacts with human adenovirus B/D fiber protein. (Microbial infection) Binds to Streptococcus pyogenes M protein and to type IV pili from Neisseria. Post-translationally, N-glycosylated on Asn-83; Asn-114 and Asn-273 in most tissues, but probably less N-glycosylated in testis. N-glycosylation on Asn-114 and Asn-273 is required for cytoprotective function. N-glycosylation on Asn-114 is required for Measles virus binding. N-glycosylation on Asn-273 is required for Neisseria binding. N-glycosylation is not required for human adenovirus binding. In terms of processing, extensively O-glycosylated in the Ser/Thr-rich domain. O-glycosylation is required for Neisseria binding but not for Measles virus or human adenovirus binding. In epithelial cells, isoforms B/D/F/H/J/L/3 are phosphorylated by YES1 in response to infection by Neisseria gonorrhoeae; which promotes infectivity. In T-cells, these isoforms may be phosphorylated by LCK. As to expression, expressed by all cells except erythrocytes.

The protein resides in the cytoplasmic vesicle. Its subcellular location is the secretory vesicle. It localises to the acrosome inner membrane. In terms of biological role, acts as a cofactor for complement factor I, a serine protease which protects autologous cells against complement-mediated injury by cleaving C3b and C4b deposited on host tissue. May be involved in the fusion of the spermatozoa with the oocyte during fertilization. Also acts as a costimulatory factor for T-cells which induces the differentiation of CD4+ into T-regulatory 1 cells. T-regulatory 1 cells suppress immune responses by secreting interleukin-10, and therefore are thought to prevent autoimmunity. Its function is as follows. (Microbial infection) A number of viral and bacterial pathogens seem to bind MCP in order to exploit its immune regulation property and directly induce an immunosuppressive phenotype in T-cells. Functionally, (Microbial infection) Acts as a receptor for Adenovirus subgroup B2 and Ad3. (Microbial infection) Acts as a receptor for cultured Measles virus. In terms of biological role, (Microbial infection) Acts as a receptor for Herpesvirus 6/HHV-6. Its function is as follows. (Microbial infection) May act as a receptor for pathogenic bacteria Neisseria and Streptococcus pyogenes. This Homo sapiens (Human) protein is Membrane cofactor protein (CD46).